A 297-amino-acid polypeptide reads, in one-letter code: MAGAASPDHLFGLRYSFYVGAYQAVITGVQAIPARAALSPDALAERDSLLYRSYIAIGSHQLVIDEIGPGAATPLQAVRLLAVYLSGGAGGKESAIRKLNELLADDAVGSNPILRLVAGTVLMHERDYAGALKHTNSGGTMELLAMNVQICLQMHRSDHAEKQLRIMQQLDEDHTLTQLANAWVDLVMGGSKIQEAHLIFQDLSEKYPATCLILNGKALCLMHMGNFEDAEGLLLESLNKDAKDAETLANLVVCSLNLGKSASRYLNQLKLAHPDHMLVKRMSSAEDSFDRACQAIS.

The protein belongs to the COPE family. In terms of assembly, oligomeric complex that consists of at least the alpha, beta, beta', gamma, delta, epsilon and zeta subunits.

It is found in the cytoplasm. The protein localises to the golgi apparatus membrane. Its subcellular location is the cytoplasmic vesicle. The protein resides in the COPI-coated vesicle membrane. Functionally, the coatomer is a cytosolic protein complex that binds to dilysine motifs and reversibly associates with Golgi non-clathrin-coated vesicles, which further mediate biosynthetic protein transport from the ER, via the Golgi up to the trans Golgi network. The coatomer complex is required for budding from Golgi membranes, and is essential for the retrograde Golgi-to-ER transport of dilysine-tagged proteins. The chain is Coatomer subunit epsilon-2 from Oryza sativa subsp. indica (Rice).